An 88-amino-acid chain; its full sequence is Yop proteins translocation protein S (88 aa).

2 consecutive transmembrane segments (helical) span residues 15-35 and 49-69; these read WLVL…GTLV and LGFV…ASWL.

This sequence belongs to the FliQ/MopD/SpaQ family.

The protein resides in the cell membrane. In terms of biological role, component of the Yop secretion machinery. This Yersinia pestis protein is Yop proteins translocation protein S (yscS).